Reading from the N-terminus, the 183-residue chain is Ribosome-recycling factor (183 aa).

This sequence belongs to the RRF family.

The protein localises to the cytoplasm. Responsible for the release of ribosomes from messenger RNA at the termination of protein biosynthesis. May increase the efficiency of translation by recycling ribosomes from one round of translation to another. This is Ribosome-recycling factor from Buchnera aphidicola subsp. Baizongia pistaciae (strain Bp).